A 204-amino-acid chain; its full sequence is Leucyl/phenylalanyl-tRNA--protein transferase (204 aa).

It belongs to the L/F-transferase family.

It is found in the cytoplasm. It carries out the reaction N-terminal L-lysyl-[protein] + L-leucyl-tRNA(Leu) = N-terminal L-leucyl-L-lysyl-[protein] + tRNA(Leu) + H(+). The catalysed reaction is N-terminal L-arginyl-[protein] + L-leucyl-tRNA(Leu) = N-terminal L-leucyl-L-arginyl-[protein] + tRNA(Leu) + H(+). It catalyses the reaction L-phenylalanyl-tRNA(Phe) + an N-terminal L-alpha-aminoacyl-[protein] = an N-terminal L-phenylalanyl-L-alpha-aminoacyl-[protein] + tRNA(Phe). In terms of biological role, functions in the N-end rule pathway of protein degradation where it conjugates Leu, Phe and, less efficiently, Met from aminoacyl-tRNAs to the N-termini of proteins containing an N-terminal arginine or lysine. This chain is Leucyl/phenylalanyl-tRNA--protein transferase, found in Rhizobium etli (strain CIAT 652).